We begin with the raw amino-acid sequence, 2005 residues long: Chitin synthase 8 (2005 aa).

Residues 5–773 (DEVAKLSQLT…AFRELEDELR (769 aa)) enclose the Myosin motor domain. 108 to 115 (GDTSSGKS) provides a ligand contact to ATP. 4 N-linked (GlcNAc...) asparagine glycosylation sites follow: N164, N364, N390, and N546. The segment at 585–631 (QSVKPMRAPSTRRPNRGNTIKRTNTIKKADDDDSDEDAADAADASTS) is disordered. Acidic residues predominate over residues 615–624 (DDDSDEDAAD). The actin-binding stretch occupies residues 647–669 (LDLLLETLEDTKTWFTLCLRPND). 2 helical membrane-spanning segments follow: residues 929-949 (KWVA…LSRF) and 965-985 (LAIN…IVVL). A glycan (N-linked (GlcNAc...) asparagine) is linked at N1076. 3 helical membrane passes run 1232–1252 (ILLA…LAAL), 1604–1624 (LIFT…IVFI), and 1626–1646 (LLST…IVLV). N1650 is a glycosylation site (N-linked (GlcNAc...) asparagine). Helical transmembrane passes span 1653–1673 (VPLT…VIFL) and 1680–1700 (MIGW…FLPL). N1770 and N1794 each carry an N-linked (GlcNAc...) asparagine glycan. The segment at 1796–1821 (SFGHSPSPSYGGTPSQFGAFAPGPGS) is disordered. Residues 1797-1811 (FGHSPSPSYGGTPSQ) are compositionally biased toward polar residues. An N-linked (GlcNAc...) asparagine glycan is attached at N1882. The segment at 1912–1950 (FATAEQQQQQQQQQQAAGLSGSGGSKSPPREAVAGGLPS) is disordered. Low complexity predominate over residues 1917-1930 (QQQQQQQQQQAAGL). A DEK-C domain is found at 1948–2003 (LPSDSQIKLDIRSLIAESDLTTITKKQLRAKLEQKYATSIESKKAFINSEIENVLS).

The protein in the N-terminal section; belongs to the TRAFAC class myosin-kinesin ATPase superfamily. Myosin family. In the C-terminal section; belongs to the chitin synthase family. Class V subfamily.

The protein localises to the cell membrane. The protein resides in the cytoplasmic vesicle membrane. It localises to the cell tip. It catalyses the reaction [(1-&gt;4)-N-acetyl-beta-D-glucosaminyl](n) + UDP-N-acetyl-alpha-D-glucosamine = [(1-&gt;4)-N-acetyl-beta-D-glucosaminyl](n+1) + UDP + H(+). In terms of biological role, polymerizes chitin, a structural polymer of the cell wall and septum, by transferring the sugar moiety of UDP-GlcNAc to the non-reducing end of the growing chitin polymer. Involved in mating tube and dikaryotic hyphae formation and required for the formation of invading hyphae during plant infection. The polypeptide is Chitin synthase 8 (Mycosarcoma maydis (Corn smut fungus)).